The sequence spans 229 residues: Ribosome maturation factor RimM (229 aa).

The segment at Met1–Val21 is disordered. One can recognise a PRC barrel domain in the interval Ala148–Tyr229.

The protein belongs to the RimM family. Binds ribosomal protein uS19.

It localises to the cytoplasm. In terms of biological role, an accessory protein needed during the final step in the assembly of 30S ribosomal subunit, possibly for assembly of the head region. Essential for efficient processing of 16S rRNA. May be needed both before and after RbfA during the maturation of 16S rRNA. It has affinity for free ribosomal 30S subunits but not for 70S ribosomes. The polypeptide is Ribosome maturation factor RimM (Burkholderia pseudomallei (strain 1106a)).